Consider the following 254-residue polypeptide: Persulfide dioxygenase ETHE1, mitochondrial (254 aa).

A mitochondrion-targeting transit peptide spans 1-7 (MAGSVLK). Ser14 and Ser19 each carry phosphoserine. N6-acetyllysine; alternate is present on Lys32. Lys32 carries the N6-succinyllysine; alternate modification. Lys66 carries the N6-acetyllysine modification. His79, His135, and Asp154 together coordinate Fe cation.

It belongs to the metallo-beta-lactamase superfamily. Glyoxalase II family. Homodimer. Monomer. Interacts with TST. May interact with RELA. It depends on Fe(2+) as a cofactor.

The protein localises to the cytoplasm. Its subcellular location is the nucleus. It localises to the mitochondrion matrix. It catalyses the reaction S-sulfanylglutathione + O2 + H2O = sulfite + glutathione + 2 H(+). Glutathione increases enzyme activity. Functionally, sulfur dioxygenase that plays an essential role in hydrogen sulfide catabolism in the mitochondrial matrix. Hydrogen sulfide (H(2)S) is first oxidized by SQRDL, giving rise to cysteine persulfide residues. ETHE1 consumes molecular oxygen to catalyze the oxidation of the persulfide, once it has been transferred to a thiophilic acceptor, such as glutathione (R-SSH). Plays an important role in metabolic homeostasis in mitochondria by metabolizing hydrogen sulfide and preventing the accumulation of supraphysiological H(2)S levels that have toxic effects, due to the inhibition of cytochrome c oxidase. First described as a protein that can shuttle between the nucleus and the cytoplasm and suppress p53-induced apoptosis by sequestering the transcription factor RELA/NFKB3 in the cytoplasm and preventing its accumulation in the nucleus. In Bos taurus (Bovine), this protein is Persulfide dioxygenase ETHE1, mitochondrial (ETHE1).